We begin with the raw amino-acid sequence, 109 residues long: Phosphoribosyl-AMP cyclohydrolase (109 aa).

D80 lines the Mg(2+) pocket. C81 provides a ligand contact to Zn(2+). Residues D82 and D84 each contribute to the Mg(2+) site. Zn(2+) contacts are provided by C97 and C104.

It belongs to the PRA-CH family. Homodimer. Mg(2+) serves as cofactor. The cofactor is Zn(2+).

The protein localises to the cytoplasm. It carries out the reaction 1-(5-phospho-beta-D-ribosyl)-5'-AMP + H2O = 1-(5-phospho-beta-D-ribosyl)-5-[(5-phospho-beta-D-ribosylamino)methylideneamino]imidazole-4-carboxamide. Its pathway is amino-acid biosynthesis; L-histidine biosynthesis; L-histidine from 5-phospho-alpha-D-ribose 1-diphosphate: step 3/9. Its function is as follows. Catalyzes the hydrolysis of the adenine ring of phosphoribosyl-AMP. This is Phosphoribosyl-AMP cyclohydrolase from Clostridium beijerinckii (strain ATCC 51743 / NCIMB 8052) (Clostridium acetobutylicum).